Reading from the N-terminus, the 511-residue chain is UDP-N-acetylmuramate--L-alanine ligase (511 aa).

Position 127–133 (127–133 (GTHGKTT)) interacts with ATP. Positions 481–511 (VGTVPGGEVGGATTIGGTVPGGSAPGASAAG) are disordered. The segment covering 484-504 (VPGGEVGGATTIGGTVPGGSA) has biased composition (gly residues).

This sequence belongs to the MurCDEF family.

Its subcellular location is the cytoplasm. The enzyme catalyses UDP-N-acetyl-alpha-D-muramate + L-alanine + ATP = UDP-N-acetyl-alpha-D-muramoyl-L-alanine + ADP + phosphate + H(+). The protein operates within cell wall biogenesis; peptidoglycan biosynthesis. Cell wall formation. The polypeptide is UDP-N-acetylmuramate--L-alanine ligase (Salinispora arenicola (strain CNS-205)).